We begin with the raw amino-acid sequence, 271 residues long: Dermonecrotic toxin SpeSicTox-betaIF1 (271 aa).

Residue H3 is part of the active site. Residues E23 and D25 each contribute to the Mg(2+) site. The active-site Nucleophile is the H39. 2 disulfides stabilise this stretch: C43-C49 and C45-C188. A Mg(2+)-binding site is contributed by D83.

Belongs to the arthropod phospholipase D family. Class II subfamily. Mg(2+) serves as cofactor. In terms of tissue distribution, expressed by the venom gland.

The protein localises to the secreted. The catalysed reaction is an N-(acyl)-sphingosylphosphocholine = an N-(acyl)-sphingosyl-1,3-cyclic phosphate + choline. It catalyses the reaction an N-(acyl)-sphingosylphosphoethanolamine = an N-(acyl)-sphingosyl-1,3-cyclic phosphate + ethanolamine. The enzyme catalyses a 1-acyl-sn-glycero-3-phosphocholine = a 1-acyl-sn-glycero-2,3-cyclic phosphate + choline. It carries out the reaction a 1-acyl-sn-glycero-3-phosphoethanolamine = a 1-acyl-sn-glycero-2,3-cyclic phosphate + ethanolamine. Dermonecrotic toxins cleave the phosphodiester linkage between the phosphate and headgroup of certain phospholipids (sphingolipid and lysolipid substrates), forming an alcohol (often choline) and a cyclic phosphate. This toxin acts on sphingomyelin (SM). It may also act on ceramide phosphoethanolamine (CPE), lysophosphatidylcholine (LPC) and lysophosphatidylethanolamine (LPE), but not on lysophosphatidylserine (LPS), and lysophosphatidylglycerol (LPG). It acts by transphosphatidylation, releasing exclusively cyclic phosphate products as second products. Induces dermonecrosis, hemolysis, increased vascular permeability, edema, inflammatory response, and platelet aggregation. The polypeptide is Dermonecrotic toxin SpeSicTox-betaIF1 (Sicarius peruensis (Six-eyed sand spider)).